The following is a 273-amino-acid chain: 4-hydroxy-tetrahydrodipicolinate reductase (273 aa).

Residues 12 to 17 and Glu-38 each bind NAD(+); that span reads GAGGRM. Residue Arg-39 participates in NADP(+) binding. Residues 102–104 and 126–129 contribute to the NAD(+) site; these read GTT and AANF. The active-site Proton donor/acceptor is His-159. His-160 contacts (S)-2,3,4,5-tetrahydrodipicolinate. Catalysis depends on Lys-163, which acts as the Proton donor. 169–170 is a binding site for (S)-2,3,4,5-tetrahydrodipicolinate; it reads GT.

It belongs to the DapB family. In terms of assembly, homotetramer.

Its subcellular location is the cytoplasm. It carries out the reaction (S)-2,3,4,5-tetrahydrodipicolinate + NAD(+) + H2O = (2S,4S)-4-hydroxy-2,3,4,5-tetrahydrodipicolinate + NADH + H(+). The enzyme catalyses (S)-2,3,4,5-tetrahydrodipicolinate + NADP(+) + H2O = (2S,4S)-4-hydroxy-2,3,4,5-tetrahydrodipicolinate + NADPH + H(+). The protein operates within amino-acid biosynthesis; L-lysine biosynthesis via DAP pathway; (S)-tetrahydrodipicolinate from L-aspartate: step 4/4. In terms of biological role, catalyzes the conversion of 4-hydroxy-tetrahydrodipicolinate (HTPA) to tetrahydrodipicolinate. In Pectobacterium carotovorum subsp. carotovorum (strain PC1), this protein is 4-hydroxy-tetrahydrodipicolinate reductase.